A 214-amino-acid chain; its full sequence is Holliday junction branch migration complex subunit RuvA (214 aa).

Residues 1–68 (MIGFLQGKVL…QPKPVLIGFD (68 aa)) form a domain I region. A domain II region spans residues 69–146 (SAEEKDFFQL…RFLLAADEAG (78 aa)). The tract at residues 147 to 160 (AGDGVSKTGTPSLP) is flexible linker. Residues 161–214 (IQKAIDQVVDVLVQQLGHTPSAAKMMVAQALDRDPEIMTPEALFDEVYKGDVDA) are domain III.

It belongs to the RuvA family. In terms of assembly, homotetramer. Forms an RuvA(8)-RuvB(12)-Holliday junction (HJ) complex. HJ DNA is sandwiched between 2 RuvA tetramers; dsDNA enters through RuvA and exits via RuvB. An RuvB hexamer assembles on each DNA strand where it exits the tetramer. Each RuvB hexamer is contacted by two RuvA subunits (via domain III) on 2 adjacent RuvB subunits; this complex drives branch migration. In the full resolvosome a probable DNA-RuvA(4)-RuvB(12)-RuvC(2) complex forms which resolves the HJ.

It localises to the cytoplasm. In terms of biological role, the RuvA-RuvB-RuvC complex processes Holliday junction (HJ) DNA during genetic recombination and DNA repair, while the RuvA-RuvB complex plays an important role in the rescue of blocked DNA replication forks via replication fork reversal (RFR). RuvA specifically binds to HJ cruciform DNA, conferring on it an open structure. The RuvB hexamer acts as an ATP-dependent pump, pulling dsDNA into and through the RuvAB complex. HJ branch migration allows RuvC to scan DNA until it finds its consensus sequence, where it cleaves and resolves the cruciform DNA. This Desulforapulum autotrophicum (strain ATCC 43914 / DSM 3382 / VKM B-1955 / HRM2) (Desulfobacterium autotrophicum) protein is Holliday junction branch migration complex subunit RuvA.